The sequence spans 580 residues: Frizzled-10-B (580 aa).

The first 20 residues, 1–20 (MEPRVVTALLLSLAAALCSG), serve as a signal peptide directing secretion. Residues 21-224 (ISSINPDRSG…DVYWSKNDKK (204 aa)) lie on the Extracellular side of the membrane. In terms of domain architecture, FZ spans 29–150 (SGEGRCQAIE…NDPNYLCMEA (122 aa)). Intrachain disulfides connect cysteine 34–cysteine 95, cysteine 42–cysteine 88, cysteine 79–cysteine 117, cysteine 106–cysteine 147, and cysteine 110–cysteine 134. The N-linked (GlcNAc...) asparagine glycan is linked to asparagine 48. An N-linked (GlcNAc...) asparagine glycan is attached at asparagine 153. Residues 173 to 194 (RPNSGHEMYPKDPKGRSSCENS) are disordered. The span at 180–189 (MYPKDPKGRS) shows a compositional bias: basic and acidic residues. Residues 225 to 245 (FAFIWIAIWSLLCFFSSAFTV) traverse the membrane as a helical segment. Residues 246–261 (LTFLVDPLRFKYPERP) lie on the Cytoplasmic side of the membrane. Residues 262-282 (IIFLSMCYCVYSVGYIIRLFA) traverse the membrane as a helical segment. Over 283-309 (GADSIACDRDSGQLYVIQEGLESTGCT) the chain is Extracellular. The helical transmembrane segment at 310–330 (IVFLILYYFGMASSLWWVILT) threads the bilayer. The Cytoplasmic segment spans residues 331-350 (LTWFLAAGKKWGHEAIEANS). Residues 351–371 (SYFHLAAWAIPAVKTIMILVM) form a helical membrane-spanning segment. At 372–392 (RRVAGDELTGVCYVGSMDVNA) the chain is on the extracellular side. A helical membrane pass occupies residues 393-413 (LTGFVLIPLACYLIIGTSFIL). Topologically, residues 414 to 442 (SGFVALFHIRRVMKTGGENTDKLEKLMVR) are cytoplasmic. A helical membrane pass occupies residues 443-463 (IGVFSVLYTVPATCVIACYFY). Residues 464–501 (ERLNMDFWKILATQDKCKMDSQTKTLDCTMTSSIPAVE) lie on the Extracellular side of the membrane. A helical transmembrane segment spans residues 502-522 (IFMVKIFMLLVVGITSGMWIW). Residues 523-580 (TSKTVQSWQNVFSKSLKKRNRNKPASVITSAGIYKKPQQPPKIHHGKYESALRSPTCV) lie on the Cytoplasmic side of the membrane. The short motif at 525–530 (KTVQSW) is the Lys-Thr-X-X-X-Trp motif, mediates interaction with the PDZ domain of Dvl family members element. The segment at 558–580 (KPQQPPKIHHGKYESALRSPTCV) is disordered. The short motif at 578 to 580 (TCV) is the PDZ-binding element.

This sequence belongs to the G-protein coupled receptor Fz/Smo family. As to expression, expressed in liver, lung, brain, testis, heart and ovary.

Its subcellular location is the cell membrane. Its function is as follows. Receptor for Wnt proteins. Most of frizzled receptors are coupled to the beta-catenin canonical signaling pathway, which leads to the activation of disheveled proteins, inhibition of GSK-3 kinase, nuclear accumulation of beta-catenin and activation of Wnt target genes. A second signaling pathway involving PKC and calcium fluxes has been seen for some family members, but it is not yet clear if it represents a distinct pathway or if it can be integrated in the canonical pathway, as PKC seems to be required for Wnt-mediated inactivation of GSK-3 kinase. Both pathways seem to involve interactions with G-proteins. May be involved in transduction and intercellular transmission of polarity information during tissue morphogenesis and/or in differentiated tissues. Activated by Wnt8. Could have an antagonizing activity in the morphogenesis during development. The protein is Frizzled-10-B (fzd10-b) of Xenopus laevis (African clawed frog).